The sequence spans 790 residues: PGC-1 and ERR-induced regulator in muscle protein 1 (790 aa).

4 disordered regions span residues 38–391 (LLSS…TPIS), 425–449 (VASSPPVSEAVPRMTESSGLVSTPV), 507–545 (SVAGPSPNKPGSGQASARPSAPQTATGAHGGPGAWEAVA), and 626–648 (QRSRRRGSPEPLPRADPVPAPIP). Residues 40–52 (SSDIDQGDSSGSS) show a composition bias toward low complexity. 2 stretches are compositionally biased toward polar residues: residues 80–89 (ATQQPVSRSQ) and 98–107 (TGQQTPSTSA). Positions 111 to 123 (APPSLGPGASPPS) are enriched in low complexity. Residues 146 to 157 (APRPPGEPPGSP) show a composition bias toward pro residues. The span at 158–169 (KSPGHSTGSQRP) shows a compositional bias: low complexity. The segment covering 170–179 (PDSPGAPPRS) has biased composition (pro residues). Over residues 366–391 (KPQSDTAVSTPASEPQSSVALSTPIS) the composition is skewed to polar residues. A compositionally biased stretch (polar residues) spans 515–532 (KPGSGQASARPSAPQTAT). Residues 635-648 (EPLPRADPVPAPIP) are compositionally biased toward pro residues.

In terms of tissue distribution, muscle-specific expression is increased by endurance exercise.

It localises to the cytoplasm. Its subcellular location is the nucleus. In terms of biological role, regulates the expression of selective PPARGC1A/B and ESRRA/B/G target genes with roles in glucose and lipid metabolism, energy transfer, contractile function, muscle mitochondrial biogenesis and oxidative capacity. Required for the efficient induction of MT-CO2, MT-CO3, COX4I1, TFB1M, TFB2M, POLRMT and SIRT3 by PPARGC1A. Positively regulates the PPARGC1A/ESRRG-induced expression of CKMT2, TNNI3 and SLC2A4 and negatively regulates the PPARGC1A/ESRRG-induced expression of PDK4. The polypeptide is PGC-1 and ERR-induced regulator in muscle protein 1 (PERM1) (Homo sapiens (Human)).